A 231-amino-acid polypeptide reads, in one-letter code: Sugar fermentation stimulation protein homolog (231 aa).

It belongs to the SfsA family.

In Citrifermentans bemidjiense (strain ATCC BAA-1014 / DSM 16622 / JCM 12645 / Bem) (Geobacter bemidjiensis), this protein is Sugar fermentation stimulation protein homolog.